Consider the following 591-residue polypeptide: Monoterpene synthase 8, chloroplastic (591 aa).

The transit peptide at 1 to 46 directs the protein to the chloroplast; it reads MSLLLAPPSYFPFRGLRRSTAAKQPPCLRLVKCTADRQSPEAARRS. Positions 346, 350, and 497 each coordinate Mg(2+). Positions 346–350 match the DDXXD motif motif; the sequence is DDVYD.

The protein belongs to the terpene synthase family. Tpsa subfamily. Requires Mg(2+) as cofactor. It depends on Mn(2+) as a cofactor. As to expression, highly expressed in flowers, petals and sepals, but almost undetectable in vegetative organs.

Its subcellular location is the plastid. The protein resides in the chloroplast. It catalyses the reaction (2E)-geranyl diphosphate + H2O = (R)-linalool + diphosphate. It carries out the reaction (2E)-geranyl diphosphate + H2O = (S)-linalool + diphosphate. The enzyme catalyses (2E,6E)-farnesyl diphosphate = (S)-beta-bisabolene + diphosphate. The catalysed reaction is (2E,6E)-farnesyl diphosphate = (E,R)-alpha-bisabolene + diphosphate. It catalyses the reaction (2E,6E)-farnesyl diphosphate = (E)-beta-farnesene + diphosphate. It carries out the reaction (2E,6E)-farnesyl diphosphate = beta-sesquiphellandrene + diphosphate. The enzyme catalyses (2E,6E)-farnesyl diphosphate = (1S,5S,6R)-alpha-bergamotene + diphosphate. The protein operates within secondary metabolite biosynthesis; terpenoid biosynthesis. Sesquiterpene and monoterpene synthase involved in the biosynthesis of volatile compounds present in floral scent. Mediates the conversion of (2E)-geranyl diphosphate (GPP) into linalool, with trace levels of myrcene, limonene and (Z)-beta-ocimene. Also acts as a sesquiterpene synthase by catalyzing the conversion of farnesyl diphosphate (FPP) to alpha-bergamotene and beta-bisabolene and to minor products including alpha-curcumene, cis-alpha-bisabolene, beta-farnesene and beta-sesquiphellandrene, as well as seven other unidentified sesquiterpenes. This chain is Monoterpene synthase 8, chloroplastic, found in Hedychium coronarium (White butterfly ginger-lily).